A 208-amino-acid polypeptide reads, in one-letter code: Large ribosomal subunit protein uL3 (208 aa).

The interval 123-146 (RHGQSRGPMAHGSRYHRRPGSMGP) is disordered.

The protein belongs to the universal ribosomal protein uL3 family. In terms of assembly, part of the 50S ribosomal subunit. Forms a cluster with proteins L14 and L19.

One of the primary rRNA binding proteins, it binds directly near the 3'-end of the 23S rRNA, where it nucleates assembly of the 50S subunit. The sequence is that of Large ribosomal subunit protein uL3 from Streptococcus thermophilus (strain CNRZ 1066).